The primary structure comprises 368 residues: Multifunctional CCA protein (368 aa).

2 residues coordinate ATP: glycine 8 and arginine 11. The CTP site is built by glycine 8 and arginine 11. Aspartate 21 and aspartate 23 together coordinate Mg(2+). ATP is bound by residues arginine 91, arginine 137, and arginine 140. Arginine 91, arginine 137, and arginine 140 together coordinate CTP.

It belongs to the tRNA nucleotidyltransferase/poly(A) polymerase family. Bacterial CCA-adding enzyme type 1 subfamily. As to quaternary structure, monomer. Can also form homodimers and oligomers. Mg(2+) is required as a cofactor. Ni(2+) serves as cofactor.

It carries out the reaction a tRNA precursor + 2 CTP + ATP = a tRNA with a 3' CCA end + 3 diphosphate. The enzyme catalyses a tRNA with a 3' CCA end + 2 CTP + ATP = a tRNA with a 3' CCACCA end + 3 diphosphate. In terms of biological role, catalyzes the addition and repair of the essential 3'-terminal CCA sequence in tRNAs without using a nucleic acid template. Adds these three nucleotides in the order of C, C, and A to the tRNA nucleotide-73, using CTP and ATP as substrates and producing inorganic pyrophosphate. tRNA 3'-terminal CCA addition is required both for tRNA processing and repair. Also involved in tRNA surveillance by mediating tandem CCA addition to generate a CCACCA at the 3' terminus of unstable tRNAs. While stable tRNAs receive only 3'-terminal CCA, unstable tRNAs are marked with CCACCA and rapidly degraded. This chain is Multifunctional CCA protein, found in Pseudomonas putida (strain ATCC 47054 / DSM 6125 / CFBP 8728 / NCIMB 11950 / KT2440).